Consider the following 241-residue polypeptide: MATSTNSQDDAALSAAQAAALYRLMTWLSPAFPVGAFSYSSGIEWAVEAGDVVDAPTLQAWLAAMLSHGTGFCDAVLLAHAHRAVISNDDDALRSLAELACAYVSSRERHLETTAQGRAFVEIARAAWANGRLERAVADCAGLTAYPVAVGIVSAAHGVPLAATLHGFLHAVVSNWISAGARLIPLGQTDSQRLIAALEPAVIATGARALIASLDDLGGATFRADLASLQHEAQYTRLFRS.

This sequence belongs to the UreF family. In terms of assembly, ureD, UreF and UreG form a complex that acts as a GTP-hydrolysis-dependent molecular chaperone, activating the urease apoprotein by helping to assemble the nickel containing metallocenter of UreC. The UreE protein probably delivers the nickel.

The protein localises to the cytoplasm. In terms of biological role, required for maturation of urease via the functional incorporation of the urease nickel metallocenter. This Rhodopseudomonas palustris (strain BisB18) protein is Urease accessory protein UreF.